We begin with the raw amino-acid sequence, 301 residues long: Putative F-box/LRR-repeat protein 19 (301 aa).

The F-box domain maps to 18 to 66 (PDWSELTRECLLDIFSRLSQEQRWIGPMLVSKNWMNACYDPTLNTIFDL). LRR repeat units follow at residues 108–133 (IRHC…WIKN), 134–159 (CPNV…DISY), 160–185 (SYGI…KRNL), 231–256 (YSTL…DLRG), and 257–282 (CISL…IKPD).

This chain is Putative F-box/LRR-repeat protein 19 (FBL19), found in Arabidopsis thaliana (Mouse-ear cress).